The primary structure comprises 88 residues: Homeobox protein knotted-1-like 3 (88 aa).

Positions E4 to L24 constitute an ELK domain. The homeobox; TALE-type DNA-binding region spans C25–S88.

The protein belongs to the TALE/KNOX homeobox family. Strongly expressed in ear inflorescence primordia and shoot meristem. Weakly expressed in embryos. Absent from leaves.

Its subcellular location is the nucleus. In terms of biological role, probably binds to the DNA sequence 5'-TGAC-3'. In Zea mays (Maize), this protein is Homeobox protein knotted-1-like 3 (KNOX3).